The sequence spans 231 residues: Putative Nudix hydrolase FPV054 (231 aa).

The Nudix hydrolase domain maps to 74-217 (SKRRSFSEIL…SNEKYEYLHF (144 aa)). Residues 125-146 (GRVKNKESIYQCLSRELSEESD) carry the Nudix box motif. Glu131 lines the Mg(2+) pocket. The active-site Nucleophile is Glu140. Mg(2+)-binding residues include Glu144 and Asp165.

This sequence belongs to the Nudix hydrolase family. Requires Mg(2+) as cofactor. Mn(2+) is required as a cofactor.

In terms of biological role, decapping enzyme required for the removal of the 5'-end m7GpppN cap tethered to viral and host mRNAs to allow their decay in cells. May therefore accelerate viral and cellular mRNA turnover to eliminate competing host mRNAs and allow stage-specific synthesis of viral proteins. Acceleration of the turnover of cellular transcripts may even promote the shutoff of host protein synthesis. Does not cleave unmethylated RNAs or RNAs shorter than 24 nucleotides. This is Putative Nudix hydrolase FPV054 from Vertebrata (FPV).